The chain runs to 602 residues: Bifunctional xylanase/deacetylase (602 aa).

Positions Met-1–Ala-14 are cleaved as a signal peptide. In terms of domain architecture, GH11 spans Thr-17 to Asn-211. Glu-108 serves as the catalytic Nucleophile. Glu-198 functions as the Proton donor in the catalytic mechanism. Positions Gly-216–Asn-240 are disordered. Over residues Asn-224–Thr-233 the composition is skewed to gly residues. A CBM6 domain is found at Asp-249–Ser-366. One can recognise a NodB homology domain in the interval Lys-402 to Val-578.

Belongs to the glycosyl hydrolase 11 (cellulase G) family. In the later growth phases, seems to undergo a proteolytic cleavage into a 30 kDa protein possessing xylanolytic activity.

Its subcellular location is the secreted. The enzyme catalyses Endohydrolysis of (1-&gt;4)-beta-D-xylosidic linkages in xylans.. The protein operates within glycan degradation; xylan degradation. Endo-acting xylanase which specifically cleaves internal linkages on the xylan backbone, releasing xylooligosaccharides. Is also probably able, via its C-terminal domain, to remove acetyl groups from acetylated xylan, and thus it is probably capable of hydrolyzing acetylated xylan. The polypeptide is Bifunctional xylanase/deacetylase (xyn11A) (Pseudobutyrivibrio xylanivorans).